Consider the following 218-residue polypeptide: tRNA (guanine-N(7)-)-methyltransferase (218 aa).

Glu-43, Asp-68, Glu-101, and Asn-124 together coordinate S-adenosyl-L-methionine. The substrate site is built by Lys-128 and Asp-160.

It belongs to the class I-like SAM-binding methyltransferase superfamily. TrmB family.

The enzyme catalyses guanosine(46) in tRNA + S-adenosyl-L-methionine = N(7)-methylguanosine(46) in tRNA + S-adenosyl-L-homocysteine. The protein operates within tRNA modification; N(7)-methylguanine-tRNA biosynthesis. Catalyzes the formation of N(7)-methylguanine at position 46 (m7G46) in tRNA. The protein is tRNA (guanine-N(7)-)-methyltransferase of Acetivibrio thermocellus (strain ATCC 27405 / DSM 1237 / JCM 9322 / NBRC 103400 / NCIMB 10682 / NRRL B-4536 / VPI 7372) (Clostridium thermocellum).